Consider the following 60-residue polypeptide: LKCNQLIPPFWKTCPKGKNLCYKMTMRAAPMVPVKRGCIDVCPKSSLLIKYMCCNTNKCN.

Intrachain disulfides connect Cys3-Cys21, Cys14-Cys38, Cys42-Cys53, and Cys54-Cys59.

It belongs to the three-finger toxin family. Short-chain subfamily. Type IA cytotoxin sub-subfamily. As to quaternary structure, monomer in solution; Homodimer and oligomer in the presence of negatively charged lipids forming a pore with a size ranging between 20 and 30 Angstroms. In terms of tissue distribution, expressed by the venom gland.

Its subcellular location is the secreted. The protein resides in the target cell membrane. Functionally, shows cytolytic activity on many different cells by forming pore in lipid membranes. In vivo, increases heart rate or kills the animal by cardiac arrest. In addition, it binds to heparin with high affinity, interacts with Kv channel-interacting protein 1 (KCNIP1) in a calcium-independent manner, and binds to integrin alpha-V/beta-3 (ITGAV/ITGB3) with moderate affinity. The sequence is that of Cytotoxin 1 from Naja mossambica (Mozambique spitting cobra).